The sequence spans 76 residues: Gallerimycin (76 aa).

The first 19 residues, 1–19 (MKIAFIVAISLAFLAVTSC), serve as a signal peptide directing secretion.

This sequence belongs to the invertebrate defensin family.

In terms of biological role, has antifungal activity against the entomopathogenic fungus M.nisopliae, but does not display any antifungal activity against S.cerevisiae nor any antimicrobial activity against M.luteus, B.subtilis, and E.coli. The sequence is that of Gallerimycin (LOC113523440) from Galleria mellonella (Greater wax moth).